A 276-amino-acid chain; its full sequence is Putative ripening-related protein 5 (276 aa).

The first 18 residues, 1 to 18 (MAMIFLLAALSTTHLASS), serve as a signal peptide directing secretion.

It belongs to the kiwellin family.

The protein localises to the secreted. This is Putative ripening-related protein 5 from Oryza sativa subsp. japonica (Rice).